The sequence spans 279 residues: Membrane protein insertase YidC (279 aa).

The first 22 residues, 1–22 (MKHLKRNMALLSVAALSFILTA), serve as a signal peptide directing secretion. The N-palmitoyl cysteine moiety is linked to residue Cys-23. The S-diacylglycerol cysteine moiety is linked to residue Cys-23. The next 5 membrane-spanning stretches (helical) occupy residues 35 to 55 (IWDGVIVYNFSRFIIYLSKLF), 59 to 79 (YGWGIIVFTIIIRIIILPLMI), 129 to 149 (MAGCLPLIIQLPVMYALYAAV), 170 to 190 (PYFILPILAALFTFMSTWLSM), and 210 to 230 (PLVILITALNFPAAITLYWVV). Residues 253–268 (EEKIQTEKAKRKAIEK) show a composition bias toward basic and acidic residues. Positions 253 to 279 (EEKIQTEKAKRKAIEKAKRRAMKSKRK) are disordered. Positions 269 to 279 (AKRRAMKSKRK) are enriched in basic residues.

Belongs to the OXA1/ALB3/YidC family. Type 2 subfamily.

The protein localises to the cell membrane. Its function is as follows. Required for the insertion and/or proper folding and/or complex formation of integral membrane proteins into the membrane. Involved in integration of membrane proteins that insert both dependently and independently of the Sec translocase complex, as well as at least some lipoproteins. This is Membrane protein insertase YidC from Pediococcus pentosaceus (strain ATCC 25745 / CCUG 21536 / LMG 10740 / 183-1w).